An 800-amino-acid chain; its full sequence is MLISNEWLKEYVTIDDSVSNLAERITRTGIEVDDLIDYTKDIKNLVVGFVKSKEKHPDADKLNVCQVDIGEDEPVQIVCGAPNVDAGQYVIVAKVGGRLPGGIKIKRAKLRGERSEGMICSLQEIGISSNYIPKSFESGIFVFSESQVPGTDALQALYLDDQVMEFDLTPNRADALSMIGTAYEVAALYNTKMTKPETTSNELELSANDELTVTIENEDKVPYYSARVVHDVTIEPSPIWMQVRLIKAGIRPINNVVDISNYVLLEYGQPLHMFDQDAIGSQQIVVRQANEGEKMTTLDDTERELLTSDIVITNGQTPIALAGVMGGDFSEVKEHTSNIVIEGAIFDPVSIRHTSRRLNLRSESSSRFEKGIATEFVDEAVDRACYLLQTYANGKVLKDRVSSGELGAFITPIDITADKINRTIGFDLSQNDIVTIFNQLGFDTEINDDVITVQVPSRRKDITIKEDLIEEVARIYGYDDIPSTLPVFEKVTSGQLTDRQYKTRMVKEVLEGAGLDQAITYSLVSKEDATAFAMQQRQTIDLLMPMSEAHASLRQSLLPHLIEAASYNVARKNKDVKLFEIGNVFFANGEGELPDQVEYLSGILTGDYVVNQWQGKKETVDFYLAKGVVDRVSEKLNLEFSYRRADIDGLHPGRTAEILLENKVIGFIGELHPTLAADNDLKRTYVFELNFDALMAVSVGYINYQPIPRFPGMSRDIALEVDQNIPAADLLSTIHAHGGNILKDTLVFDVYQGEHLEKGKKSIAIRLNYLDTEETLTDERVSKVQAEIEAALIEQGAVIR.

The region spanning 39–154 (TKDIKNLVVG…ESQVPGTDAL (116 aa)) is the tRNA-binding domain. The B5 domain occupies 408–483 (AFITPIDITA…RIYGYDDIPS (76 aa)). The Mg(2+) site is built by Asp461, Asp467, Glu470, and Glu471. An FDX-ACB domain is found at 708-800 (PRFPGMSRDI…ALIEQGAVIR (93 aa)).

This sequence belongs to the phenylalanyl-tRNA synthetase beta subunit family. Type 1 subfamily. In terms of assembly, tetramer of two alpha and two beta subunits. The cofactor is Mg(2+).

The protein localises to the cytoplasm. The catalysed reaction is tRNA(Phe) + L-phenylalanine + ATP = L-phenylalanyl-tRNA(Phe) + AMP + diphosphate + H(+). In Staphylococcus aureus (strain MRSA252), this protein is Phenylalanine--tRNA ligase beta subunit.